A 258-amino-acid chain; its full sequence is Regulatory protein RecX (258 aa).

Belongs to the RecX family.

It is found in the cytoplasm. Its function is as follows. Modulates RecA activity. The polypeptide is Regulatory protein RecX (Streptococcus pneumoniae (strain JJA)).